Reading from the N-terminus, the 240-residue chain is Ribosomal RNA small subunit methyltransferase G (240 aa).

Residues glycine 77, phenylalanine 82, 128–129 (AE), and arginine 148 each bind S-adenosyl-L-methionine. Positions 217-240 (EKRSKTPKKYPRKAGTPNKSPLLK) are disordered.

The protein belongs to the methyltransferase superfamily. RNA methyltransferase RsmG family.

The protein localises to the cytoplasm. Its function is as follows. Specifically methylates the N7 position of guanine in position 535 of 16S rRNA. This is Ribosomal RNA small subunit methyltransferase G from Staphylococcus carnosus (strain TM300).